Here is a 367-residue protein sequence, read N- to C-terminus: MGYTLPVFATAAAVAALRCLTEGACPQQVTLALLRPNRCETLPIAQGACLDAQQALAITYSEPSDALDLTRYTPIWAWVRWQDPVTAPKIQIEGGFGVGRDRATGKAAIYRYARLLLTTNLLLYCPKERAIAVTIVLPQGRDLAERTSNAAFGIVEGLSLLGTTGIAQPLTAPEQLDRYREDLAEKAAQSSTLVFCIGENGLQVAQQLQIPPSRCVKTANWLGPMLVAAAHYEVQQLLLLGYHGKLIKLAAGIFHTHHHLADARQEILTAFCALAGLDLEMLHQVWQAPTVEAALKFLERMVPHVLPEILSHIAHRIDQRATAYIHAHCAAPIGRSLQVGCALFGRDRQIVATSGAGNIILREISIR.

It belongs to the CbiD family.

The catalysed reaction is Co-precorrin-5B + S-adenosyl-L-methionine = Co-precorrin-6A + S-adenosyl-L-homocysteine. It functions in the pathway cofactor biosynthesis; adenosylcobalamin biosynthesis; cob(II)yrinate a,c-diamide from sirohydrochlorin (anaerobic route): step 6/10. Functionally, catalyzes the methylation of C-1 in cobalt-precorrin-5B to form cobalt-precorrin-6A. This chain is Cobalt-precorrin-5B C(1)-methyltransferase, found in Thermosynechococcus vestitus (strain NIES-2133 / IAM M-273 / BP-1).